A 206-amino-acid polypeptide reads, in one-letter code: Large ribosomal subunit protein uL4 (206 aa).

A disordered region spans residues 60 to 84 (TAKPFKQKGTGHARQGSKRSPQFRG). The span at 64–76 (FKQKGTGHARQGS) shows a compositional bias: basic residues.

The protein belongs to the universal ribosomal protein uL4 family. Part of the 50S ribosomal subunit.

Its function is as follows. One of the primary rRNA binding proteins, this protein initially binds near the 5'-end of the 23S rRNA. It is important during the early stages of 50S assembly. It makes multiple contacts with different domains of the 23S rRNA in the assembled 50S subunit and ribosome. In terms of biological role, forms part of the polypeptide exit tunnel. The chain is Large ribosomal subunit protein uL4 from Rhodospirillum rubrum (strain ATCC 11170 / ATH 1.1.1 / DSM 467 / LMG 4362 / NCIMB 8255 / S1).